Consider the following 265-residue polypeptide: Hydroxyethylthiazole kinase (265 aa).

Met43 contributes to the substrate binding site. Residues Arg119 and Ser165 each coordinate ATP. Ala192 serves as a coordination point for substrate.

Belongs to the Thz kinase family. Mg(2+) is required as a cofactor.

It carries out the reaction 5-(2-hydroxyethyl)-4-methylthiazole + ATP = 4-methyl-5-(2-phosphooxyethyl)-thiazole + ADP + H(+). It functions in the pathway cofactor biosynthesis; thiamine diphosphate biosynthesis; 4-methyl-5-(2-phosphoethyl)-thiazole from 5-(2-hydroxyethyl)-4-methylthiazole: step 1/1. Catalyzes the phosphorylation of the hydroxyl group of 4-methyl-5-beta-hydroxyethylthiazole (THZ). This is Hydroxyethylthiazole kinase from Haemophilus influenzae (strain 86-028NP).